The sequence spans 317 residues: tRNA-dihydrouridine(16) synthase (317 aa).

FMN-binding positions include 7-9 (PME) and Gln68. Cys98 acts as the Proton donor in catalysis. FMN contacts are provided by residues Lys139, 199-201 (NGE), and 223-224 (GR).

The protein belongs to the Dus family. DusC subfamily. The cofactor is FMN.

It carries out the reaction 5,6-dihydrouridine(16) in tRNA + NADP(+) = uridine(16) in tRNA + NADPH + H(+). It catalyses the reaction 5,6-dihydrouridine(16) in tRNA + NAD(+) = uridine(16) in tRNA + NADH + H(+). Its function is as follows. Catalyzes the synthesis of 5,6-dihydrouridine (D), a modified base found in the D-loop of most tRNAs, via the reduction of the C5-C6 double bond in target uridines. Specifically modifies U16 in tRNAs. The chain is tRNA-dihydrouridine(16) synthase from Pseudomonas syringae pv. tomato (strain ATCC BAA-871 / DC3000).